Reading from the N-terminus, the 88-residue chain is Large ribosomal subunit protein bL31B (88 aa).

It belongs to the bacterial ribosomal protein bL31 family. Type B subfamily. Part of the 50S ribosomal subunit.

The protein is Large ribosomal subunit protein bL31B of Herminiimonas arsenicoxydans.